We begin with the raw amino-acid sequence, 133 residues long: NLP effector protein 14 (133 aa).

Residues 1 to 9 carry the Conserved undecapeptide motifI I motif; it reads MYSWYFPKD. Residues 16–22 carry the Hepta-peptide GHRHDWE motif II motif; it reads GHRHDWE.

The protein belongs to the Necrosis inducing protein (NPP1) family.

It localises to the secreted. In terms of biological role, secreted effector that contributes strongly to virulence during infection by P.capsici. Causes large necrotic areas in both host C.annuum and non-host N.benthamiana. This chain is NLP effector protein 14, found in Phytophthora capsici.